Consider the following 177-residue polypeptide: R-phycoerythrin beta chain (177 aa).

Residues N35 and D39 each contribute to the (2R,3E)-phycoerythrobilin site. Residues C50, D54, and C61 each coordinate phycourobilin. (2R,3E)-phycoerythrobilin is bound by residues N72, 77-78 (RR), C82, and 84-85 (RD). N4-methylasparagine is present on N72. 147 to 148 (SG) serves as a coordination point for phycourobilin. Residue C158 coordinates (2R,3E)-phycoerythrobilin.

The protein belongs to the phycobiliprotein family. Heterododecamer of 6 alpha and 6 beta chains. The basic functional unit of phycobiliproteins is a ring-shaped hexamer formed from two back-to-back trimers contacting via the alpha chain subunits. The trimers are composed of alpha/beta subunit heterodimers arranged around a three-fold axis of symmetry. The phycoerythrins also contain a gamma subunit which is located in the center of the hexamer. In terms of processing, contains two covalently linked phycoerythrobilin chromophores and one covalently linked phycourobilin chromophore.

It is found in the plastid. The protein resides in the chloroplast thylakoid membrane. Its function is as follows. Light-harvesting photosynthetic tetrapyrrole chromophore-protein from the phycobiliprotein complex. In Griffithsia monilis (Red alga), this protein is R-phycoerythrin beta chain (cpeB).